Reading from the N-terminus, the 73-residue chain is Pollen allergen Amb t 5 (73 aa).

The N-terminal stretch at 1–20 (MKNIFMLTLFILIITSTIKA) is a signal peptide. The propeptide occupies 21-33 (IGSTNEVDEIKQE). 4 disulfides stabilise this stretch: Cys-38–Cys-68, Cys-44–Cys-59, Cys-51–Cys-61, and Cys-52–Cys-72.

Monomer.

This chain is Pollen allergen Amb t 5, found in Ambrosia trifida (Giant ragweed).